We begin with the raw amino-acid sequence, 180 residues long: ADP ribosylation factor 4 (180 aa).

A lipid anchor (N-myristoyl glycine) is attached at Gly-2. GTP contacts are provided by residues 24–31, 67–71, and 126–129; these read GLDAAGKT, DVGGQ, and NKQD.

This sequence belongs to the small GTPase superfamily. Arf family. Uniformly distributed throughout adults.

Its subcellular location is the golgi apparatus. Functionally, GTP-binding protein involved in protein trafficking; may modulate vesicle budding and uncoating within the Golgi apparatus. In Drosophila melanogaster (Fruit fly), this protein is ADP ribosylation factor 4.